A 244-amino-acid chain; its full sequence is Phosphatidylinositol phosphate synthase (244 aa).

A run of 3 helical transmembrane segments spans residues 24–42 (YARA…FLIR), 49–66 (TVTL…LVFY), and 72–91 (FWGT…DGNM). 48 to 51 (DTVT) contributes to the a CDP-1,2-diacyl-sn-glycerol binding site. Asp-85 and Asp-88 together coordinate Mg(2+). The a CDP-1,2-diacyl-sn-glycerol site is built by Gly-89, Arg-93, and Ser-99. Residues Asp-106 and Asp-110 each contribute to the Mg(2+) site. Asp-110 serves as the catalytic Proton acceptor. The next 3 membrane-spanning stretches (helical) occupy residues 117 to 137 (IFGG…LCAV), 174 to 190 (LVIS…HKFG), and 196 to 214 (VLLP…VTLI).

It belongs to the CDP-alcohol phosphatidyltransferase class-I family. As to quaternary structure, homodimer. The cofactor is Mg(2+).

It is found in the cell membrane. It catalyses the reaction a CDP-1,2-diacyl-sn-glycerol + 1D-myo-inositol 3-phosphate = a 1,2-diacyl-sn-glycero-3-phospho-(1D-myo-inositol-3-phosphate) + CMP + H(+). The enzyme catalyses 1,2-di-(9Z-octadecenoyl)-sn-glycero-3-cytidine-5'-diphosphate + 1D-myo-inositol 3-phosphate = 1,2-di-(9Z-octadecenoyl)-sn-glycero-3-phospho-(1D-myo-inositol-3-phosphate) + CMP + H(+). The protein operates within phospholipid metabolism; phosphatidylinositol phosphate biosynthesis. Its function is as follows. Catalyzes the conjugation of the 1'-hydroxyl group of D-myo-inositol-3-phosphate (also named L-myo-inositol-1-phosphate) with a lipid tail of cytidine diphosphate diacylglycerol (CDP-DAG), forming phosphatidylinositol phosphate (PIP) and CMP. PIP is a precursor of phosphatidylinositol (PI) which is an essential lipid required for cell wall formation. The polypeptide is Phosphatidylinositol phosphate synthase (Streptomyces avermitilis (strain ATCC 31267 / DSM 46492 / JCM 5070 / NBRC 14893 / NCIMB 12804 / NRRL 8165 / MA-4680)).